We begin with the raw amino-acid sequence, 473 residues long: MTQDSALLQAPEAIPSESLRDGSNSRKVFIKTYGCQMNVYDSMRMSDALARDGYEPTEDMEVADLVLLNTCHIREKAAEKVYSALGRLREMKKKKAADGREMMIGVAGCVAQAEGEEILRRAPAVDVVIGPQTYHRLPEALRRAKQGQRVVDTEYAIEDKFEHLPIAESRRIRARGVTAFLTVQEGCDKFCTFCVVPYTRGSEVSRSVSQIVEEAEKLADSGVREITLLGQNVNAWHGAGSQGEAWSLGDLLYRLAEIPGLARLRYTTSHPRDMDDRLINAHRDLSALMPYLHLPVQSGSDRILKAMNRRHTAAEYLALIERIRTVRPDIALSGDFITGFPGETDEDFKDTLRLVEEVRYAQAFSFKYSTRPGTPGAELKDQVPEEIKAERLERLQMLLLKQQQEFAESCVGKEIDLLLEKPGRMPEQLIGRSPWLQSVNVDAKASQIGDIIKVRITGTGTNSLFAEHAEAAV.

Positions 1 to 21 are disordered; it reads MTQDSALLQAPEAIPSESLRD. Residues 26 to 146 form the MTTase N-terminal domain; it reads RKVFIKTYGC…LPEALRRAKQ (121 aa). Residues C35, C71, C109, C187, C191, and C194 each coordinate [4Fe-4S] cluster. Positions 173-405 constitute a Radical SAM core domain; sequence RARGVTAFLT…QMLLLKQQQE (233 aa). The TRAM domain maps to 408–470; sequence ESCVGKEIDL…TNSLFAEHAE (63 aa).

This sequence belongs to the methylthiotransferase family. MiaB subfamily. Monomer. The cofactor is [4Fe-4S] cluster.

It localises to the cytoplasm. It catalyses the reaction N(6)-dimethylallyladenosine(37) in tRNA + (sulfur carrier)-SH + AH2 + 2 S-adenosyl-L-methionine = 2-methylsulfanyl-N(6)-dimethylallyladenosine(37) in tRNA + (sulfur carrier)-H + 5'-deoxyadenosine + L-methionine + A + S-adenosyl-L-homocysteine + 2 H(+). In terms of biological role, catalyzes the methylthiolation of N6-(dimethylallyl)adenosine (i(6)A), leading to the formation of 2-methylthio-N6-(dimethylallyl)adenosine (ms(2)i(6)A) at position 37 in tRNAs that read codons beginning with uridine. In Rhizobium johnstonii (strain DSM 114642 / LMG 32736 / 3841) (Rhizobium leguminosarum bv. viciae), this protein is tRNA-2-methylthio-N(6)-dimethylallyladenosine synthase.